We begin with the raw amino-acid sequence, 255 residues long: Hydroxyacylglutathione hydrolase (255 aa).

Residues H56, H58, D60, H61, H112, D129, and H167 each contribute to the Zn(2+) site.

Belongs to the metallo-beta-lactamase superfamily. Glyoxalase II family. As to quaternary structure, monomer. Requires Zn(2+) as cofactor.

The enzyme catalyses an S-(2-hydroxyacyl)glutathione + H2O = a 2-hydroxy carboxylate + glutathione + H(+). Its pathway is secondary metabolite metabolism; methylglyoxal degradation; (R)-lactate from methylglyoxal: step 2/2. In terms of biological role, thiolesterase that catalyzes the hydrolysis of S-D-lactoyl-glutathione to form glutathione and D-lactic acid. The sequence is that of Hydroxyacylglutathione hydrolase from Pseudomonas fluorescens (strain SBW25).